The primary structure comprises 298 residues: UDP-N-acetylenolpyruvoylglucosamine reductase (298 aa).

In terms of domain architecture, FAD-binding PCMH-type spans 26–191 (KTGGAADVFV…LDATFSLALE (166 aa)). The active site involves Arg170. Catalysis depends on Ser220, which acts as the Proton donor. Glu290 is an active-site residue.

The protein belongs to the MurB family. FAD is required as a cofactor.

It localises to the cytoplasm. It carries out the reaction UDP-N-acetyl-alpha-D-muramate + NADP(+) = UDP-N-acetyl-3-O-(1-carboxyvinyl)-alpha-D-glucosamine + NADPH + H(+). It functions in the pathway cell wall biogenesis; peptidoglycan biosynthesis. Functionally, cell wall formation. The protein is UDP-N-acetylenolpyruvoylglucosamine reductase of Listeria monocytogenes serotype 4b (strain CLIP80459).